A 170-amino-acid chain; its full sequence is NADH-quinone oxidoreductase subunit B (170 aa).

C42, C43, C107, and C136 together coordinate [4Fe-4S] cluster.

It belongs to the complex I 20 kDa subunit family. As to quaternary structure, NDH-1 is composed of 14 different subunits. Subunits NuoB, C, D, E, F, and G constitute the peripheral sector of the complex. It depends on [4Fe-4S] cluster as a cofactor.

It is found in the cell inner membrane. It catalyses the reaction a quinone + NADH + 5 H(+)(in) = a quinol + NAD(+) + 4 H(+)(out). NDH-1 shuttles electrons from NADH, via FMN and iron-sulfur (Fe-S) centers, to quinones in the respiratory chain. The immediate electron acceptor for the enzyme in this species is believed to be ubiquinone. Couples the redox reaction to proton translocation (for every two electrons transferred, four hydrogen ions are translocated across the cytoplasmic membrane), and thus conserves the redox energy in a proton gradient. In Campylobacter concisus (strain 13826), this protein is NADH-quinone oxidoreductase subunit B.